A 308-amino-acid polypeptide reads, in one-letter code: Ferrochelatase (308 aa).

Residues histidine 167 and glutamate 239 each contribute to the Fe cation site.

It belongs to the ferrochelatase family.

The protein localises to the cytoplasm. The catalysed reaction is heme b + 2 H(+) = protoporphyrin IX + Fe(2+). The protein operates within porphyrin-containing compound metabolism; protoheme biosynthesis; protoheme from protoporphyrin-IX: step 1/1. Catalyzes the ferrous insertion into protoporphyrin IX. The chain is Ferrochelatase from Thermoplasma acidophilum (strain ATCC 25905 / DSM 1728 / JCM 9062 / NBRC 15155 / AMRC-C165).